The chain runs to 149 residues: Nucleoside diphosphate kinase (149 aa).

ATP is bound by residues K9, F57, R85, T91, R102, and N112. Residue H115 is the Pros-phosphohistidine intermediate of the active site.

The protein belongs to the NDK family. It depends on Mg(2+) as a cofactor.

The protein resides in the cytoplasm. It catalyses the reaction a 2'-deoxyribonucleoside 5'-diphosphate + ATP = a 2'-deoxyribonucleoside 5'-triphosphate + ADP. The enzyme catalyses a ribonucleoside 5'-diphosphate + ATP = a ribonucleoside 5'-triphosphate + ADP. Its function is as follows. Major role in the synthesis of nucleoside triphosphates other than ATP. The ATP gamma phosphate is transferred to the NDP beta phosphate via a ping-pong mechanism, using a phosphorylated active-site intermediate. This chain is Nucleoside diphosphate kinase, found in Methanococcoides burtonii (strain DSM 6242 / NBRC 107633 / OCM 468 / ACE-M).